Consider the following 713-residue polypeptide: Phospholipase A1 PLIP2, chloroplastic (713 aa).

Residues 1–32 (MDSLCLNSGLHGVIPAITAVGNGGCGGVVEVR) constitute a chloroplast transit peptide. Disordered regions lie at residues 118-140 (WKHE…DEEV) and 232-261 (ALKA…EKNK). Positions 122-140 (EEEDDDEVEDEDGDEDEEV) are enriched in acidic residues. The GXSXG motif lies at 426–430 (GHSLG). Ser428 (acyl-ester intermediate) is an active-site residue. Active-site charge relay system residues include Asp489 and His608.

Belongs to the AB hydrolase superfamily. Lipase family.

The protein resides in the plastid. It is found in the chloroplast membrane. Its subcellular location is the chloroplast stroma. The catalysed reaction is a 1,2-diacyl-3-O-(beta-D-galactosyl)-sn-glycerol + 2 H2O = 3-beta-D-galactosyl-sn-glycerol + 2 a fatty acid + 2 H(+). It carries out the reaction a 1,2-diacyl-sn-glycero-3-phosphocholine + H2O = a 2-acyl-sn-glycero-3-phosphocholine + a fatty acid + H(+). The enzyme catalyses 1-hexadecanoyl-2-(9Z-octadecenoyl)-sn-glycero-3-phosphocholine + H2O = 2-(9Z-octadecenoyl)-sn-glycero-3-phosphocholine + hexadecanoate + H(+). It catalyses the reaction 1,2-di-(9Z-octadecenoyl)-sn-glycero-3-phosphocholine + H2O = 2-(9Z-octadecenoyl)-sn-glycero-3-phosphocholine + (9Z)-octadecenoate + H(+). The catalysed reaction is 1-octadecanoyl-2-(9Z-octadecenoyl)-sn-glycero-3-phosphocholine + H2O = 2-(9Z-octadecenoyl)-sn-glycero-3-phosphocholine + octadecanoate + H(+). It carries out the reaction 1-octadecanoyl-2-(9Z,12Z)-octadecadienoyl-sn-glycero-3-phosphocholine + H2O = 2-(9Z,12Z-octadecadienoyl)-sn-glycero-3-phosphocholine + octadecanoate + H(+). The enzyme catalyses 1,2-di-(9Z,12Z-octadecadienoyl)-sn-glycero-3-phosphocholine + H2O = 2-(9Z,12Z-octadecadienoyl)-sn-glycero-3-phosphocholine + (9Z,12Z)-octadecadienoate + H(+). It catalyses the reaction 1-(9Z-octadecenoyl)-2-hexadecanoyl-sn-glycero-3-phosphocholine + H2O = 2-hexadecanoyl-sn-glycero-3-phosphocholine + (9Z)-octadecenoate + H(+). Sn-1-specific phospholipase A1 that catalyzes the initial step of oxylipins and jasmonate (JA) biosynthesis. Hydrolyzes polyunsaturated acyl groups preferentially from chloroplastic monogalactosyldiacylglycerol (MGDG). May function downstream of abscisic acid (ABA) and provide a link between ABA-mediated abiotic stress responses and oxylipin and JA signalings. In vitro, possesses broad substrate specificity. Can hydrolyze the galactolipids monogalactosyldiacylglycerol (MGDG) and digalactosyldiacylglycerol (DGDG), the sulfolipid sulfoquinovosyldiacylglycerol (SQDG), and the phoshpolipids phosphatidylcholine (PC), and phosphatidylglycerol (PG). The chain is Phospholipase A1 PLIP2, chloroplastic from Arabidopsis thaliana (Mouse-ear cress).